The following is a 124-amino-acid chain: Small ribosomal subunit protein uS12 (124 aa).

Aspartate 89 bears the 3-methylthioaspartic acid mark.

Belongs to the universal ribosomal protein uS12 family. As to quaternary structure, part of the 30S ribosomal subunit. Contacts proteins S8 and S17. May interact with IF1 in the 30S initiation complex.

Its function is as follows. With S4 and S5 plays an important role in translational accuracy. Interacts with and stabilizes bases of the 16S rRNA that are involved in tRNA selection in the A site and with the mRNA backbone. Located at the interface of the 30S and 50S subunits, it traverses the body of the 30S subunit contacting proteins on the other side and probably holding the rRNA structure together. The combined cluster of proteins S8, S12 and S17 appears to hold together the shoulder and platform of the 30S subunit. In Photobacterium profundum (strain SS9), this protein is Small ribosomal subunit protein uS12.